The following is a 259-amino-acid chain: uncharacterized protein (259 aa).

His9, His11, Glu97, His133, His157, and Asp207 together coordinate a divalent metal cation.

It belongs to the metallo-dependent hydrolases superfamily. TatD-type hydrolase family. It depends on a divalent metal cation as a cofactor.

This is an uncharacterized protein from Escherichia coli (strain K12).